The primary structure comprises 284 residues: RNase adapter protein RapZ (284 aa).

Position 8–15 (8–15 (GRSGSGKS)) interacts with ATP. 56 to 59 (DVRN) contacts GTP. The RNA-binding stretch occupies residues 266 to 284 (RSRGKNVQSRHRTLEKRKP).

Belongs to the RapZ-like family. RapZ subfamily. Homotrimer.

Its function is as follows. Modulates the synthesis of GlmS, by affecting the processing and stability of the regulatory small RNA GlmZ. When glucosamine-6-phosphate (GlcN6P) concentrations are high in the cell, RapZ binds GlmZ and targets it to cleavage by RNase E. Consequently, GlmZ is inactivated and unable to activate GlmS synthesis. Under low GlcN6P concentrations, RapZ is sequestered and inactivated by an other regulatory small RNA, GlmY, preventing GlmZ degradation and leading to synthesis of GlmS. The polypeptide is RNase adapter protein RapZ (Shigella boydii serotype 18 (strain CDC 3083-94 / BS512)).